A 396-amino-acid polypeptide reads, in one-letter code: Digeranylgeranylglycerophospholipid reductase (396 aa).

Residues Gly-14, Glu-33, Cys-44, Gly-45, Gly-47, Arg-100, Ala-124, Glu-162, Asp-283, Gly-295, and Ile-296 each contribute to the FAD site. Residues Lys-338 and Val-374 each coordinate a 2,3-bis-O-(geranylgeranyl)-sn-glycerol 1-phospholipid.

Belongs to the geranylgeranyl reductase family. DGGGPL reductase subfamily. As to quaternary structure, monomer. FAD serves as cofactor.

It is found in the cell membrane. It catalyses the reaction 2,3-bis-O-(phytanyl)-sn-glycerol 1-phosphate + 8 NADP(+) = 2,3-bis-O-(geranylgeranyl)-sn-glycerol 1-phosphate + 8 NADPH + 8 H(+). It carries out the reaction 2,3-bis-O-(phytanyl)-sn-glycerol 1-phosphate + 8 NAD(+) = 2,3-bis-O-(geranylgeranyl)-sn-glycerol 1-phosphate + 8 NADH + 8 H(+). The enzyme catalyses a 2,3-bis-O-phytanyl-sn-glycerol 1-phospholipid + 8 A = a 2,3-bis-O-(geranylgeranyl)-sn-glycerol 1-phospholipid + 8 AH2. The catalysed reaction is CDP-2,3-bis-O-(geranylgeranyl)-sn-glycerol + 8 AH2 = CDP-2,3-bis-O-(phytanyl)-sn-glycerol + 8 A. It catalyses the reaction archaetidylserine + 8 AH2 = 2,3-bis-O-phytanyl-sn-glycero-3-phospho-L-serine + 8 A. The protein operates within membrane lipid metabolism; glycerophospholipid metabolism. In terms of biological role, is involved in the reduction of 2,3-digeranylgeranylglycerophospholipids (unsaturated archaeols) into 2,3-diphytanylglycerophospholipids (saturated archaeols) in the biosynthesis of archaeal membrane lipids. Catalyzes the formation of archaetidic acid (2,3-di-O-phytanyl-sn-glyceryl phosphate) from 2,3-di-O-geranylgeranylglyceryl phosphate (DGGGP) via the hydrogenation of each double bond of the isoprenoid chains. Can use both NADH and NADPH as electron donors. Also catalyzes the reduction of 2,3-di-O-geranylgeranylglyceryl phosphate analogs such as 2,3-di-O-phytyl-sn-glyceryl phosphate (DPHGP), 3-O-(2,3-di-O-phytyl-sn-glycero-phospho)-sn-glycerol (DPHGPG) and 2,3-di-O-phytyl-sn-glycero-phosphoethanolamine (DPHGPE). Is not active toward 2,3-di-O-geranylgeranylglycerol. Is also probably able to reduce double bonds of geranyl groups in CDP-2,3-bis-O-(geranylgeranyl)-sn-glycerol and archaetidylserine, thus acting at various stages in the biosynthesis of archaeal membrane lipids. This chain is Digeranylgeranylglycerophospholipid reductase, found in Thermoplasma acidophilum (strain ATCC 25905 / DSM 1728 / JCM 9062 / NBRC 15155 / AMRC-C165).